We begin with the raw amino-acid sequence, 307 residues long: Delta-9 acyl-lipid desaturase 2 (307 aa).

The span at 1–17 (MSVTSTVEENHQKNPST) shows a compositional bias: polar residues. Residues 1-21 (MSVTSTVEENHQKNPSTPAAV) form a disordered region. A helical membrane pass occupies residues 53-73 (LALLAPFYFTWSALWVTFLFY). Fe cation is bound by residues His85 and His90. Residues 85 to 90 (HRNLAH) carry the Histidine box-1 motif. Residues 99–119 (LEYLLAYCALLAIQGDPIDWV) form a helical membrane-spanning segment. His122, His125, and His126 together coordinate Fe cation. Positions 122-126 (HRYHH) match the Histidine box-2 motif. The next 2 membrane-spanning stretches (helical) occupy residues 182 to 202 (VLFHILGLGFFLFYLGGMSFV) and 204 to 224 (WGMGVGAALEVHVTCLINSLC). Fe cation is bound by residues His225, His254, His257, and His258. The Histidine box-3 signature appears at 254–258 (HNNHH).

The protein belongs to the fatty acid desaturase type 1 family. Fe cation serves as cofactor. In terms of tissue distribution, strongly expressed in flowers, roots, leaves, seedpods, and inflorescence meristems.

Its subcellular location is the endoplasmic reticulum membrane. It catalyses the reaction a 1-hexacosanoyl-2-acyl-phosphoglycerolipid + 2 Fe(II)-[cytochrome b5] + O2 + 2 H(+) = a 1-[(17Z)-hexacos-17-enoyl]-2-acyl-phosphoglycerolipid + 2 Fe(III)-[cytochrome b5] + 2 H2O. The catalysed reaction is a 1-tetracosanoyl-2-acyl-phosphoglycerolipid + 2 Fe(II)-[cytochrome b5] + O2 + 2 H(+) = a 1-[(15Z)-tetracos-15-enoyl]-2-acyl-phosphoglycerolipid + 2 Fe(III)-[cytochrome b5] + 2 H2O. It participates in lipid metabolism; polyunsaturated fatty acid biosynthesis. In terms of biological role, involved in delta-9 desaturation of fatty acids. Plays a role in the production of very-long-chain monounsaturated fatty acids (VLCMUFAs) in seed lipids and in membrane phospholipids and sphingolipids. Acts as C-16:0 desaturase for monogalactosyl diacylglycerol (MGDG) and phosphatidylglycerol (PG). Is an essential component for cold adaptation. Is essential to adjust the acyl composition of organelle membrane lipid composition in response to cold stress. The sequence is that of Delta-9 acyl-lipid desaturase 2 from Arabidopsis thaliana (Mouse-ear cress).